The sequence spans 143 residues: Transcriptional regulator MraZ (143 aa).

SpoVT-AbrB domains are found at residues Glu-5–Glu-47 and Ala-76–Leu-119.

The protein belongs to the MraZ family. As to quaternary structure, forms oligomers.

The protein localises to the cytoplasm. The protein resides in the nucleoid. This Halalkalibacterium halodurans (strain ATCC BAA-125 / DSM 18197 / FERM 7344 / JCM 9153 / C-125) (Bacillus halodurans) protein is Transcriptional regulator MraZ.